The chain runs to 190 residues: Shikimate kinase (190 aa).

15–20 (GSGKST) is an ATP binding site. S19 provides a ligand contact to Mg(2+). Residues D37, R61, and G83 each contribute to the substrate site. R121 serves as a coordination point for ATP. R148 is a binding site for substrate.

The protein belongs to the shikimate kinase family. As to quaternary structure, monomer. The cofactor is Mg(2+).

It localises to the cytoplasm. The enzyme catalyses shikimate + ATP = 3-phosphoshikimate + ADP + H(+). It participates in metabolic intermediate biosynthesis; chorismate biosynthesis; chorismate from D-erythrose 4-phosphate and phosphoenolpyruvate: step 5/7. In terms of biological role, catalyzes the specific phosphorylation of the 3-hydroxyl group of shikimic acid using ATP as a cosubstrate. This Chlorobium chlorochromatii (strain CaD3) protein is Shikimate kinase.